Here is a 410-residue protein sequence, read N- to C-terminus: Cytochrome P450 monooxygenase mpsF (410 aa).

Residue C355 participates in heme binding.

It belongs to the cytochrome P450 family. Requires heme as cofactor.

It participates in secondary metabolite biosynthesis. In terms of biological role, cytochrome P450 monooxygenase; part of the gene cluster that mediates the biosynthesis of macrophasetins, 3-decalinoyltetramic acids (DTAs) which feature a tetramate (pyrrolidine-2,4-dione) unit connected to a decalin fragment and that have potent bioactivities. The PKS-NRPS mpsA together with its associated enoylreductase partner mpsG incorporate one unit of acetyl-CoA, seven units of malonyl-CoA, and one unit of L-alanine to assemble the linear tetramic acid intermediate corresponding to the backbone of macrophasetins. Without the Diels-Alderase mpsD, the mpsA/G product can undergo the non-enzymatic intramolecular Diels-Alder (IMDA) reaction to generate both macrophasetin A and macrophasetin B. Catalyzed by mpsD, the linear tetramic acid intermediate is thoroughly converted to macrophasetin A via the endo-IMDA reaction in a regioselective and stereoselective manner. Finally, the cytochrome P450 monooxygenase mpsF catalyzes the hydroxylation at C20 to yield the end product macrophasetin C. The chain is Cytochrome P450 monooxygenase mpsF from Macrophomina phaseolina (strain MS6) (Charcoal rot fungus).